The sequence spans 389 residues: S-adenosylmethionine synthase (389 aa).

His17 is a binding site for ATP. Asp19 serves as a coordination point for Mg(2+). Glu45 contacts K(+). Residues Glu58 and Gln101 each coordinate L-methionine. Residues 101-111 are flexible loop; sequence QSPDIAQGVTE. Residues 168–170, 234–235, Asp243, 249–250, Ala266, and Lys270 each bind ATP; these read DSK, RF, and RK. Asp243 contributes to the L-methionine binding site. Residue Lys274 participates in L-methionine binding.

Belongs to the AdoMet synthase family. In terms of assembly, homotetramer; dimer of dimers. Requires Mg(2+) as cofactor. The cofactor is K(+).

It is found in the cytoplasm. The enzyme catalyses L-methionine + ATP + H2O = S-adenosyl-L-methionine + phosphate + diphosphate. Its pathway is amino-acid biosynthesis; S-adenosyl-L-methionine biosynthesis; S-adenosyl-L-methionine from L-methionine: step 1/1. Catalyzes the formation of S-adenosylmethionine (AdoMet) from methionine and ATP. The overall synthetic reaction is composed of two sequential steps, AdoMet formation and the subsequent tripolyphosphate hydrolysis which occurs prior to release of AdoMet from the enzyme. This is S-adenosylmethionine synthase from Geobacter sp. (strain M21).